The following is a 369-amino-acid chain: Anhydro-N-acetylmuramic acid kinase (369 aa).

Gly-12–Asp-19 contacts ATP.

Belongs to the anhydro-N-acetylmuramic acid kinase family.

It carries out the reaction 1,6-anhydro-N-acetyl-beta-muramate + ATP + H2O = N-acetyl-D-muramate 6-phosphate + ADP + H(+). It functions in the pathway amino-sugar metabolism; 1,6-anhydro-N-acetylmuramate degradation. The protein operates within cell wall biogenesis; peptidoglycan recycling. Catalyzes the specific phosphorylation of 1,6-anhydro-N-acetylmuramic acid (anhMurNAc) with the simultaneous cleavage of the 1,6-anhydro ring, generating MurNAc-6-P. Is required for the utilization of anhMurNAc either imported from the medium or derived from its own cell wall murein, and thus plays a role in cell wall recycling. The protein is Anhydro-N-acetylmuramic acid kinase of Escherichia coli (strain K12 / MC4100 / BW2952).